Here is a 127-residue protein sequence, read N- to C-terminus: Putative 2Fe-2S ferredoxin (127 aa).

Positions 23, 54, and 58 each coordinate [2Fe-2S] cluster.

Belongs to the 2Fe2S Shethna-type ferredoxin family. [2Fe-2S] cluster serves as cofactor.

Its function is as follows. Ferredoxins are iron-sulfur proteins that transfer electrons in a wide variety of metabolic reactions. The protein is Putative 2Fe-2S ferredoxin (cbiW) of Priestia megaterium (Bacillus megaterium).